Consider the following 124-residue polypeptide: Large ribosomal subunit protein bL12 (124 aa).

This sequence belongs to the bacterial ribosomal protein bL12 family. As to quaternary structure, homodimer. Part of the ribosomal stalk of the 50S ribosomal subunit. Forms a multimeric L10(L12)X complex, where L10 forms an elongated spine to which 2 to 4 L12 dimers bind in a sequential fashion. Binds GTP-bound translation factors.

Functionally, forms part of the ribosomal stalk which helps the ribosome interact with GTP-bound translation factors. Is thus essential for accurate translation. This chain is Large ribosomal subunit protein bL12, found in Allorhizobium ampelinum (strain ATCC BAA-846 / DSM 112012 / S4) (Agrobacterium vitis (strain S4)).